A 141-amino-acid chain; its full sequence is Large ribosomal subunit protein uL13 (141 aa).

This sequence belongs to the universal ribosomal protein uL13 family. As to quaternary structure, part of the 50S ribosomal subunit.

This protein is one of the early assembly proteins of the 50S ribosomal subunit, although it is not seen to bind rRNA by itself. It is important during the early stages of 50S assembly. The protein is Large ribosomal subunit protein uL13 of Sulfurovum sp. (strain NBC37-1).